The sequence spans 200 residues: BmK-YA precursor (200 aa).

A signal peptide spans 1-23 (MIFHQFYSILILCLIFPNQVVQS). Positions 24 to 34 (DKERQDWIPSD) are excised as a propeptide. The disordered stretch occupies residues 30–200 (WIPSDYGGYM…GYMNPAGRSD (171 aa)). Ala-42 is subject to Alanine amide. Residues 45–100 (SDEERQDWIPSDYGGHMNPAGRSDEERQDWIPSDYGGHMNPAGRSNEERQDWIPSD) constitute a propeptide that is removed on maturation. Ala-108 carries the post-translational modification Alanine amide. Residues 111–144 (SDEERQDWIPSDYGGHMNPAGRSNEERQDWIPSD) constitute a propeptide that is removed on maturation. An Alanine amide modification is found at Ala-152. Positions 155–188 (SDEERQDWIPSDYGGHMNPAGRSDEERQDWIPSD) are excised as a propeptide. The residue at position 196 (Ala-196) is an Alanine amide. Positions 199-200 (SD) are excised as a propeptide.

Venom gland.

It localises to the secreted. Functionally, synthetic BmK-YA activates human opioid receptors in vitro, with highest activity on the delta-type/OPRD1 receptor (EC(50)=2.5 uM) and lower activity on mu-type/OPRM1 and kappa-type/OPRK1 receptors (EC(50)=17 uM and 30 uM, respectively). The protein is BmK-YA precursor of Olivierus martensii (Manchurian scorpion).